The chain runs to 112 residues: ATP synthase epsilon chain (112 aa).

This sequence belongs to the ATPase epsilon chain family. F-type ATPases have 2 components, CF(1) - the catalytic core - and CF(0) - the membrane proton channel. CF(1) has five subunits: alpha(3), beta(3), gamma(1), delta(1), epsilon(1). CF(0) has three main subunits: a, b and c.

Its subcellular location is the cell inner membrane. Functionally, produces ATP from ADP in the presence of a proton gradient across the membrane. The chain is ATP synthase epsilon chain from Rickettsia felis (strain ATCC VR-1525 / URRWXCal2) (Rickettsia azadi).